The following is a 605-amino-acid chain: uncharacterized protein (605 aa).

A disordered region spans residues phenylalanine 22–glutamate 93. The segment covering serine 46 to serine 57 has biased composition (low complexity).

This is an uncharacterized protein from Treponema pallidum (strain Nichols).